Consider the following 231-residue polypeptide: Small ribosomal subunit protein uS3 (231 aa).

One can recognise a KH type-2 domain in the interval I39–K107.

Belongs to the universal ribosomal protein uS3 family. In terms of assembly, part of the 30S ribosomal subunit. Forms a tight complex with proteins S10 and S14.

Binds the lower part of the 30S subunit head. Binds mRNA in the 70S ribosome, positioning it for translation. This is Small ribosomal subunit protein uS3 from Pelotomaculum thermopropionicum (strain DSM 13744 / JCM 10971 / SI).